Here is a 315-residue protein sequence, read N- to C-terminus: MASALTTQGTAITMKQLLEAGVHFGHQTKRWNPKMKPYIFGARNGIYIIDLQKTVGLARGALRFVSDAVAKGGMVLFVGTKKQAQDAIREEASRSGQYHVTNRWLGGTLTNFKTVKQGIDRLKTIEKMAADGTYERLPKKEVAQLEREREKLEKNLGGIKEMSRLPAAIFVIDTKKEHIAVHEANRLGIPVVAVVDTNCDPEGIEYVIPGNDDAIRSIRLFTGKIAEACIEGRARYSTWAAQHGEERRPGEEDRDAASERGQKDRRDRRDRRGGGRDRERREPREDRAAASANVEVVRKGEVTPAQPAPGSDANR.

The interval 241–315 (AQHGEERRPG…QPAPGSDANR (75 aa)) is disordered. The segment covering 243–288 (HGEERRPGEEDRDAASERGQKDRRDRRDRRGGGRDRERREPREDRA) has biased composition (basic and acidic residues).

This sequence belongs to the universal ribosomal protein uS2 family.

This is Small ribosomal subunit protein uS2 from Anaeromyxobacter sp. (strain Fw109-5).